The primary structure comprises 402 residues: Beta-1,4-galactosyltransferase 1 (402 aa).

Topologically, residues 1–24 are cytoplasmic; it reads MKFREPLLGGSAAMPGASLQRACR. Residues 25–44 traverse the membrane as a helical; Signal-anchor for type II membrane protein segment; that stretch reads LLVAVCALHLGVTLVYYLAG. Over 45–402 the chain is Lumenal; it reads RDLRRLPQLV…KITVDIGTPS (358 aa). The disordered stretch occupies residues 77 to 130; sequence LRLRGVAPPPPLQNSSKPRSRAPSNLDAYSHPGPGPGPGSNLTSAPVPSTTTRS. N90 and N117 each carry an N-linked (GlcNAc...) asparagine glycan. Polar residues predominate over residues 116–130; the sequence is SNLTSAPVPSTTTRS. A disulfide bridge links C134 with C176. Residues 187-191, 226-228, 253-254, and W314 contribute to the UDP-alpha-D-galactose site; these read PFRNR, FNR, and VD. C247 and C266 are oxidised to a cystine. Mn(2+) is bound at residue D254. 316–319 is a binding site for N-acetyl-D-glucosamine; sequence GEDD. H347 lines the Mn(2+) pocket. 347 to 349 is a binding site for UDP-alpha-D-galactose; it reads HSR. R359 provides a ligand contact to N-acetyl-D-glucosamine.

The protein belongs to the glycosyltransferase 7 family. In terms of assembly, homodimer; and heterodimer with alpha-lactalbumin to form lactose synthase. Interacts (via N-terminal cytoplasmic domain) with UBE2Q1 (via N-terminus); the interaction is direct. Requires Mn(2+) as cofactor. In terms of processing, the soluble form derives from the membrane forms by proteolytic processing. As to expression, detected in milk (at protein level).

The protein resides in the golgi apparatus. It is found in the golgi stack membrane. It localises to the cell membrane. Its subcellular location is the cell surface. The protein localises to the cell projection. The protein resides in the filopodium. It is found in the secreted. The enzyme catalyses D-glucose + UDP-alpha-D-galactose = lactose + UDP + H(+). It catalyses the reaction an N-acetyl-beta-D-glucosaminyl derivative + UDP-alpha-D-galactose = a beta-D-galactosyl-(1-&gt;4)-N-acetyl-beta-D-glucosaminyl derivative + UDP + H(+). The catalysed reaction is N-acetyl-D-glucosamine + UDP-alpha-D-galactose = beta-D-galactosyl-(1-&gt;4)-N-acetyl-D-glucosamine + UDP + H(+). It carries out the reaction a beta-D-GlcNAc-(1-&gt;3)-beta-D-Gal-(1-&gt;4)-beta-D-Glc-(1&lt;-&gt;1)-Cer(d18:1(4E)) + UDP-alpha-D-galactose = a neolactoside nLc4Cer(d18:1(4E)) + UDP + H(+). The enzyme catalyses a beta-D-glucosylceramide + UDP-alpha-D-galactose = a beta-D-galactosyl-(1-&gt;4)-beta-D-glucosyl-(1&lt;-&gt;1)-ceramide + UDP + H(+). It catalyses the reaction a neolactoside IV(3)-beta-GlcNAc-nLc4Cer + UDP-alpha-D-galactose = a neolactoside nLc6Cer + UDP + H(+). It participates in protein modification; protein glycosylation. Its function is as follows. The Golgi complex form catalyzes the production of lactose in the lactating mammary gland and could also be responsible for the synthesis of complex-type N-linked oligosaccharides in many glycoproteins as well as the carbohydrate moieties of glycolipids. In terms of biological role, the cell surface form functions as a recognition molecule during a variety of cell to cell and cell to matrix interactions, as those occurring during development and egg fertilization, by binding to specific oligosaccharide ligands on opposing cells or in the extracellular matrix. The secreted form is responsible for the synthesis of complex-type to N-linked oligosaccharides in many glycoproteins as well as the carbohydrate moieties of glycolipids. The protein is Beta-1,4-galactosyltransferase 1 (B4GALT1) of Bos taurus (Bovine).